The chain runs to 699 residues: Elongation factor G (699 aa).

Residues 8–283 enclose the tr-type G domain; that stretch reads EHIRNIGICA…AVVDFLPSPI (276 aa). Residues 17 to 24, 81 to 85, and 135 to 138 contribute to the GTP site; these read AHIDAGKT, DTPGH, and NKMD.

Belongs to the TRAFAC class translation factor GTPase superfamily. Classic translation factor GTPase family. EF-G/EF-2 subfamily.

The protein resides in the cytoplasm. In terms of biological role, catalyzes the GTP-dependent ribosomal translocation step during translation elongation. During this step, the ribosome changes from the pre-translocational (PRE) to the post-translocational (POST) state as the newly formed A-site-bound peptidyl-tRNA and P-site-bound deacylated tRNA move to the P and E sites, respectively. Catalyzes the coordinated movement of the two tRNA molecules, the mRNA and conformational changes in the ribosome. In Rickettsia parkeri, this protein is Elongation factor G.